The following is a 116-amino-acid chain: Non-specific lipid-transfer protein D, cotyledon-specific isoform (116 aa).

Positions 1–24 (MKNIFFSVFFLLSFLLCLANVSEA) are cleaved as a signal peptide. Intrachain disulfides connect Cys28–Cys76, Cys38–Cys53, Cys54–Cys98, and Cys74–Cys112.

This sequence belongs to the plant LTP family.

Functionally, plant non-specific lipid-transfer proteins transfer phospholipids as well as galactolipids across membranes. May play a role in wax or cutin deposition in the cell walls of expanding epidermal cells and certain secretory tissues. This chain is Non-specific lipid-transfer protein D, cotyledon-specific isoform, found in Ricinus communis (Castor bean).